Here is a 188-residue protein sequence, read N- to C-terminus: Elongation factor P-like protein (188 aa).

This sequence belongs to the elongation factor P family.

This Xylella fastidiosa (strain 9a5c) protein is Elongation factor P-like protein.